The primary structure comprises 230 residues: Fibrillarin-like rRNA/tRNA 2'-O-methyltransferase (230 aa).

Residues 87–88 (TT), 105–106 (EF), 130–131 (DA), and 150–153 (DVAQ) contribute to the S-adenosyl-L-methionine site.

The protein belongs to the methyltransferase superfamily. Fibrillarin family. Interacts with nop5. Component of box C/D small ribonucleoprotein (sRNP) particles that contain rpl7ae, FlpA and nop5, plus a guide RNA.

Its function is as follows. Involved in pre-rRNA and tRNA processing. Utilizes the methyl donor S-adenosyl-L-methionine to catalyze the site-specific 2'-hydroxyl methylation of ribose moieties in rRNA and tRNA. Site specificity is provided by a guide RNA that base pairs with the substrate. Methylation occurs at a characteristic distance from the sequence involved in base pairing with the guide RNA. The polypeptide is Fibrillarin-like rRNA/tRNA 2'-O-methyltransferase (Methanococcus maripaludis (strain DSM 14266 / JCM 13030 / NBRC 101832 / S2 / LL)).